Reading from the N-terminus, the 569-residue chain is Sialic acid-binding Ig-like lectin 5 (569 aa).

Residues 1–16 form the signal peptide; the sequence is MRWAWLLPLLWAGCLA. Topologically, residues 17–439 are extracellular; the sequence is TDGYSLSVTG…KSETSRGTVL (423 aa). The region spanning 18 to 116 is the Ig-like V-type domain; it reads DGYSLSVTGS…DTGTYFFRLD (99 aa). Disulfide bonds link cysteine 35-cysteine 163, cysteine 40-cysteine 96, cysteine 157-cysteine 206, and cysteine 265-cysteine 308. N-linked (GlcNAc...) asparagine glycosylation occurs at asparagine 95. Positions 114, 120, and 122 each coordinate N-acetylneuraminate. 2 Ig-like C2-type domains span residues 139-224 and 229-324; these read PNIQ…QQLS and PQKM…VSLS. Asparagine 151, asparagine 200, and asparagine 203 each carry an N-linked (GlcNAc...) asparagine glycan. N-linked (GlcNAc...) asparagine glycans are attached at residues asparagine 369, asparagine 372, and asparagine 387. The chain crosses the membrane as a helical span at residues 440-460; it reads GAIWGAGLMALLAVCLCLIFF. Over 461-569 the chain is Cytoplasmic; it reads TVKVLRKKSA…VYTEIKIHKC (109 aa). Positions 508–556 are disordered; the sequence is HLNEPGSQTQKEQPPLATVPDTQKDEPELHYASLSFQGPMPPKPQNTEA. Positions 536 to 541 match the ITIM motif motif; it reads LHYASL. An SLAM-like motif motif is present at residues 559–564; that stretch reads SVYTEI.

This sequence belongs to the immunoglobulin superfamily. SIGLEC (sialic acid binding Ig-like lectin) family. As to expression, predominantly expressed by immature monocytic/myeloid lineage cells in bone marrow. Also found at lower levels in mature neutrophils and monocytes.

The protein localises to the membrane. Functionally, putative adhesion molecule that mediates sialic-acid dependent binding to cells. Preferentially binds to alpha-2,3-linked sialic acid. The sialic acid recognition site may be masked by cis interactions with sialic acids on the same cell surface. In Mus musculus (Mouse), this protein is Sialic acid-binding Ig-like lectin 5 (Siglec5).